Here is a 546-residue protein sequence, read N- to C-terminus: uncharacterized protein (546 aa).

Helical transmembrane passes span 4–23 (ILLENPLLVLFLVAAIGYPL), 30–47 (GSSLGVAAVLFVGLAMGS), 57–79 (IVYVLGLALFVYTIGLSSGPAFV), 91–113 (ALIIGMLLVAAGLVVGAQRLLGF), and 155–177 (PVVGYSVAYPMGVMGVVLAISLV). RCK C-terminal domains lie at 189-274 (GKRL…FLGE) and 275-359 (VSEE…FFGD). 6 helical membrane-spanning segments follow: residues 372–394 (FSLGLALGLLLGIIPIPLPGGIT), 399–421 (FAGGPLIVALILGTIGRSGSMVW), 434–456 (IGLVLFLAGVGTRAGYGFVTTLA), 460–482 (GLAIFAAGAVVTCLTALATLWIG), 489–511 (PMSILIGMVAGLQTQPAVLGYAL), and 521–543 (IGYASVYPVATISKILIVQILLT).

This sequence belongs to the AAE transporter (TC 2.A.81) family.

It is found in the cell membrane. This is an uncharacterized protein from Geobacter sulfurreducens (strain ATCC 51573 / DSM 12127 / PCA).